The primary structure comprises 167 residues: NAD(P)H-quinone oxidoreductase subunit I, chloroplastic (167 aa).

2 4Fe-4S ferredoxin-type domains span residues 55 to 84 (GRIHFEFDKCIACEVCVRVCPIDLPVVDWK) and 95 to 124 (LNYSIDFGICIFCGNCVEYCPTNCLSMTEE). 8 residues coordinate [4Fe-4S] cluster: C64, C67, C70, C74, C104, C107, C110, and C114.

It belongs to the complex I 23 kDa subunit family. NDH is composed of at least 16 different subunits, 5 of which are encoded in the nucleus. [4Fe-4S] cluster serves as cofactor.

The protein resides in the plastid. It localises to the chloroplast thylakoid membrane. The catalysed reaction is a plastoquinone + NADH + (n+1) H(+)(in) = a plastoquinol + NAD(+) + n H(+)(out). It catalyses the reaction a plastoquinone + NADPH + (n+1) H(+)(in) = a plastoquinol + NADP(+) + n H(+)(out). NDH shuttles electrons from NAD(P)H:plastoquinone, via FMN and iron-sulfur (Fe-S) centers, to quinones in the photosynthetic chain and possibly in a chloroplast respiratory chain. The immediate electron acceptor for the enzyme in this species is believed to be plastoquinone. Couples the redox reaction to proton translocation, and thus conserves the redox energy in a proton gradient. The polypeptide is NAD(P)H-quinone oxidoreductase subunit I, chloroplastic (Morus indica (Mulberry)).